The chain runs to 40 residues: Dolichyl-diphosphooligosaccharide--protein glycosyltransferase subunit 4 (40 aa).

Residues 1–4 (MITD) are Lumenal-facing. Residues 5 to 25 (VQLAIFSNVLGVFLFLLVVAY) form a helical membrane-spanning segment. At 26–40 (HYINANTGKSSPKAK) the chain is on the cytoplasmic side.

The protein belongs to the OST4 family. Component of the oligosaccharyltransferase (OST) complex.

It is found in the endoplasmic reticulum membrane. Subunit of the oligosaccharyl transferase (OST) complex that catalyzes the initial transfer of a defined glycan (Glc(3)Man(9)GlcNAc(2) in eukaryotes) from the lipid carrier dolichol-pyrophosphate to an asparagine residue within an Asn-X-Ser/Thr consensus motif in nascent polypeptide chains, the first step in protein N-glycosylation. N-glycosylation occurs cotranslationally and the complex associates with the Sec61 complex at the channel-forming translocon complex that mediates protein translocation across the endoplasmic reticulum (ER). All subunits are required for a maximal enzyme activity. The polypeptide is Dolichyl-diphosphooligosaccharide--protein glycosyltransferase subunit 4 (Drosophila persimilis (Fruit fly)).